Reading from the N-terminus, the 299-residue chain is Phosphoribosylaminoimidazole-succinocarboxamide synthase (299 aa).

It belongs to the SAICAR synthetase family.

The enzyme catalyses 5-amino-1-(5-phospho-D-ribosyl)imidazole-4-carboxylate + L-aspartate + ATP = (2S)-2-[5-amino-1-(5-phospho-beta-D-ribosyl)imidazole-4-carboxamido]succinate + ADP + phosphate + 2 H(+). The protein operates within purine metabolism; IMP biosynthesis via de novo pathway; 5-amino-1-(5-phospho-D-ribosyl)imidazole-4-carboxamide from 5-amino-1-(5-phospho-D-ribosyl)imidazole-4-carboxylate: step 1/2. This Streptomyces coelicolor (strain ATCC BAA-471 / A3(2) / M145) protein is Phosphoribosylaminoimidazole-succinocarboxamide synthase.